The primary structure comprises 233 residues: Large ribosomal subunit protein uL1 (233 aa).

Belongs to the universal ribosomal protein uL1 family. As to quaternary structure, part of the 50S ribosomal subunit.

In terms of biological role, binds directly to 23S rRNA. The L1 stalk is quite mobile in the ribosome, and is involved in E site tRNA release. Protein L1 is also a translational repressor protein, it controls the translation of the L11 operon by binding to its mRNA. The protein is Large ribosomal subunit protein uL1 of Shewanella woodyi (strain ATCC 51908 / MS32).